We begin with the raw amino-acid sequence, 681 residues long: Serine/threonine-protein kinase PAK 6 (681 aa).

Disordered stretches follow at residues 1-30, 149-169, 200-256, and 268-355; these read MFRK…DPKE, GGTP…PRVL, QSSP…ESSL, and TAAT…PRTW. One can recognise a CRIB domain in the interval 12–25; it reads ISAPQNFQHRVHTS. Residues 26–406 are linker; that stretch reads FDPKEGKFVG…VVDQGDPRLL (381 aa). 2 stretches are compositionally biased toward low complexity: residues 201-212 and 268-278; these read SSPPGASPPTGT and TAATAPPSSSK. Over residues 308–333 the composition is skewed to polar residues; the sequence is SLPSDQPVGTFSPLTTSDTSSPQKSL. The Protein kinase domain maps to 407–658; it reads LDSYVKIGEG…AQELLDHPFL (252 aa). ATP-binding positions include 413–421 and lysine 436; that span reads IGEGSTGIV. The active-site Proton acceptor is the aspartate 526. A Phosphoserine; by autocatalysis modification is found at serine 560.

The protein belongs to the protein kinase superfamily. STE Ser/Thr protein kinase family. STE20 subfamily. In terms of assembly, interacts tightly with GTP-bound but not GDP-bound CDC42/p21 and RAC1. Interacts with the androgen receptor AR and the estrogen receptor ESR1. Interacts with IQGAP1 and PPM1B. Post-translationally, autophosphorylated. Phosphorylated by MAP2K6//MAPKK6, leading to PAK6 activation. In terms of tissue distribution, selectively expressed in brain and testis, with lower levels in multiple tissues including prostate and breast.

The protein resides in the cytoplasm. It is found in the nucleus. The enzyme catalyses L-seryl-[protein] + ATP = O-phospho-L-seryl-[protein] + ADP + H(+). It catalyses the reaction L-threonyl-[protein] + ATP = O-phospho-L-threonyl-[protein] + ADP + H(+). Serine/threonine protein kinase that plays a role in the regulation of gene transcription. The kinase activity is induced by various effectors including AR or MAP2K6/MAPKK6. Phosphorylates the DNA-binding domain of androgen receptor/AR and thereby inhibits AR-mediated transcription. Also inhibits ESR1-mediated transcription. May play a role in cytoskeleton regulation by interacting with IQGAP1. May protect cells from apoptosis through phosphorylation of BAD. The chain is Serine/threonine-protein kinase PAK 6 (PAK6) from Homo sapiens (Human).